Consider the following 181-residue polypeptide: NADH-quinone oxidoreductase subunit B (181 aa).

Residues cysteine 60, cysteine 61, cysteine 125, and cysteine 155 each coordinate [4Fe-4S] cluster.

This sequence belongs to the complex I 20 kDa subunit family. In terms of assembly, NDH-1 is composed of 14 different subunits. Subunits NuoB, C, D, E, F, and G constitute the peripheral sector of the complex. It depends on [4Fe-4S] cluster as a cofactor.

The protein resides in the cell inner membrane. It catalyses the reaction a quinone + NADH + 5 H(+)(in) = a quinol + NAD(+) + 4 H(+)(out). Functionally, NDH-1 shuttles electrons from NADH, via FMN and iron-sulfur (Fe-S) centers, to quinones in the respiratory chain. Couples the redox reaction to proton translocation (for every two electrons transferred, four hydrogen ions are translocated across the cytoplasmic membrane), and thus conserves the redox energy in a proton gradient. This Novosphingobium aromaticivorans (strain ATCC 700278 / DSM 12444 / CCUG 56034 / CIP 105152 / NBRC 16084 / F199) protein is NADH-quinone oxidoreductase subunit B.